Consider the following 129-residue polypeptide: Large ribosomal subunit protein bL17 (129 aa).

The protein belongs to the bacterial ribosomal protein bL17 family. Part of the 50S ribosomal subunit. Contacts protein L32.

In Acidovorax ebreus (strain TPSY) (Diaphorobacter sp. (strain TPSY)), this protein is Large ribosomal subunit protein bL17.